The sequence spans 240 residues: MAGHSKWANIKHKKAAQDAKRGKIFTRLIKEITVAARLGGGDPNSNPRLRLAVDKAYEQNMPKENVERAIKRGSGDLEGVNYEEIRYEGYGIAGAAVLVDCMTDNRVRTVADVRHAFTKYGGNLGTDGSVGFLFKHCGQLLFAPGTDEDKLMEVALEAGAEDIIAHDDGSIEVITAPYEFVAVKEALEKAGFKAELAEVTMKPVNETELTGDDSVKMQKLLDALESIDDVQEVYTTAVID.

It belongs to the TACO1 family.

The protein resides in the cytoplasm. The polypeptide is Probable transcriptional regulatory protein Nmul_A2722 (Nitrosospira multiformis (strain ATCC 25196 / NCIMB 11849 / C 71)).